A 493-amino-acid chain; its full sequence is DM7 family protein GM11958 (493 aa).

Residues 434-493 (ATKSTDTRDDGMNTADYQSQFPELEQDSEPEPEPEPEPQTEDEGEDEDIEILASLCSGSI) are disordered. Residues 457–483 (LEQDSEPEPEPEPEPQTEDEGEDEDIE) show a composition bias toward acidic residues.

It belongs to the DM7 family.

This is DM7 family protein GM11958 from Drosophila sechellia (Fruit fly).